Consider the following 476-residue polypeptide: Nitrosuccinate lyase (476 aa).

Residues Arg137, Arg140, and Arg201 each coordinate fumarate. Ser302 functions as the Proton acceptor in the catalytic mechanism. Fumarate is bound by residues Lys308 and Asn310. Arg341 serves as the catalytic Proton donor.

Belongs to the class-II fumarase/aspartase family. In terms of assembly, homotetramer.

The enzyme catalyses 2-nitrobutanedioate = fumarate + nitrite + H(+). It participates in antibiotic biosynthesis. Functionally, part of a gene cluster involved in the biosynthesis of cremeomycin, a light-sensitive o-diazoquinone with antibacterial and antiproliferative effects. Catalyzes the formation of nitrous acid from nitrosuccinic acid (2-nitrobutanedioate) by elimination of its nitro group. In Streptomyces cremeus, this protein is Nitrosuccinate lyase.